Consider the following 286-residue polypeptide: tRNA (guanine-N(1)-)-methyltransferase (286 aa).

S-adenosyl-L-methionine contacts are provided by residues Gly-116 and 140 to 145 (IGDYVL). The tract at residues 232–286 (DALPPGSLTPHEEALAAEARLHAGRSAETPPPAGAAGSQAEGPPGTSPSDAAVAH) is disordered.

The protein belongs to the RNA methyltransferase TrmD family. Homodimer.

Its subcellular location is the cytoplasm. The catalysed reaction is guanosine(37) in tRNA + S-adenosyl-L-methionine = N(1)-methylguanosine(37) in tRNA + S-adenosyl-L-homocysteine + H(+). In terms of biological role, specifically methylates guanosine-37 in various tRNAs. This Acidothermus cellulolyticus (strain ATCC 43068 / DSM 8971 / 11B) protein is tRNA (guanine-N(1)-)-methyltransferase.